Consider the following 338-residue polypeptide: Isopentenyl-diphosphate delta-isomerase (338 aa).

13-14 (RK) contributes to the substrate binding site. FMN is bound by residues 72–74 (AMT), serine 102, and asparagine 130. 102–104 (SQR) contributes to the substrate binding site. Glutamine 165 is a binding site for substrate. Glutamate 166 is a binding site for Mg(2+). Residues lysine 197, threonine 227, 274–276 (GIR), and 295–296 (AR) each bind FMN.

It belongs to the IPP isomerase type 2 family. Homooctamer. Dimer of tetramers. Requires FMN as cofactor. NADPH is required as a cofactor. The cofactor is Mg(2+).

The protein localises to the cytoplasm. The catalysed reaction is isopentenyl diphosphate = dimethylallyl diphosphate. Its function is as follows. Involved in the biosynthesis of isoprenoids. Catalyzes the 1,3-allylic rearrangement of the homoallylic substrate isopentenyl (IPP) to its allylic isomer, dimethylallyl diphosphate (DMAPP). This Deinococcus radiodurans (strain ATCC 13939 / DSM 20539 / JCM 16871 / CCUG 27074 / LMG 4051 / NBRC 15346 / NCIMB 9279 / VKM B-1422 / R1) protein is Isopentenyl-diphosphate delta-isomerase.